The sequence spans 160 residues: MKHLAIYPGSFDPLTNGHLDILQRSLGLFDKVIIAIAVNSNKSTLFSIEERLEFIHKVTQGLKGLEIDTFQGLTVDYCNKVGANSIIRGLRAVTDFDYEYAISLMNKKLAPNVETVFLMSSGEYSFISSTIVKEVARHGRDVSNQVPEIVGKALLKKLSQ.

Residue serine 10 coordinates substrate. ATP contacts are provided by residues 10 to 11 and histidine 18; that span reads SF. The substrate site is built by lysine 42, threonine 74, and arginine 88. ATP-binding positions include 89–91, glutamate 99, and 124–130; these read GLR and YSFISST.

Belongs to the bacterial CoaD family. In terms of assembly, homohexamer. The cofactor is Mg(2+).

The protein resides in the cytoplasm. The catalysed reaction is (R)-4'-phosphopantetheine + ATP + H(+) = 3'-dephospho-CoA + diphosphate. Its pathway is cofactor biosynthesis; coenzyme A biosynthesis; CoA from (R)-pantothenate: step 4/5. In terms of biological role, reversibly transfers an adenylyl group from ATP to 4'-phosphopantetheine, yielding dephospho-CoA (dPCoA) and pyrophosphate. This is Phosphopantetheine adenylyltransferase from Leptospira borgpetersenii serovar Hardjo-bovis (strain L550).